A 309-amino-acid chain; its full sequence is Sulfate adenylyltransferase subunit 2 (309 aa).

The protein belongs to the PAPS reductase family. CysD subfamily. In terms of assembly, heterodimer composed of CysD, the smaller subunit, and CysN.

The enzyme catalyses sulfate + ATP + H(+) = adenosine 5'-phosphosulfate + diphosphate. It functions in the pathway sulfur metabolism; hydrogen sulfide biosynthesis; sulfite from sulfate: step 1/3. Its function is as follows. With CysN forms the ATP sulfurylase (ATPS) that catalyzes the adenylation of sulfate producing adenosine 5'-phosphosulfate (APS) and diphosphate, the first enzymatic step in sulfur assimilation pathway. APS synthesis involves the formation of a high-energy phosphoric-sulfuric acid anhydride bond driven by GTP hydrolysis by CysN coupled to ATP hydrolysis by CysD. This chain is Sulfate adenylyltransferase subunit 2, found in Methylorubrum populi (strain ATCC BAA-705 / NCIMB 13946 / BJ001) (Methylobacterium populi).